A 205-amino-acid chain; its full sequence is Protein phosphatase inhibitor 2 (205 aa).

Disordered stretches follow at residues methionine 1–lysine 46 and glycine 64–serine 205. Alanine 2 bears the N-acetylalanine mark. Required for binding PPP1CC regions lie at residues lysine 12–asparagine 17 and lysine 43–threonine 55. A compositionally biased stretch (polar residues) spans asparagine 17–valine 26. Over residues serine 35–lysine 46 the composition is skewed to basic and acidic residues. The residue at position 44 (serine 44) is a Phosphoserine; by ATM. Phosphothreonine; by GSK3 is present on threonine 73. The span at glycine 80–threonine 91 shows a compositional bias: acidic residues. Serine 87 is subject to Phosphoserine. A phosphothreonine mark is found at threonine 89, threonine 92, and threonine 96. Basic and acidic residues predominate over residues serine 110 to glutamate 120. Residues serine 121, serine 122, serine 127, and serine 130 each carry the phosphoserine modification. A compositionally biased stretch (acidic residues) spans serine 121–serine 130. The segment covering proline 131–lysine 143 has biased composition (basic and acidic residues). The interval histidine 147–glutamate 150 is required for binding PPP1CC catalytic center, displacing metal ions and inhibition of PPP1CC catalytic activity. Over residues aspartate 167–aspartate 179 the composition is skewed to acidic residues. Over residues serine 182–serine 205 the composition is skewed to polar residues.

It belongs to the protein phosphatase inhibitor 2 family. In terms of assembly, heterodimer with PP1. Post-translationally, phosphorylation on Ser-44 by ATM activates PP1 by dissociating the PP1-PPP1R2 complex. Phosphorylation on Thr-73 by GSK3 activates PP1 by dissociating the PP1-PPP1R2 complex.

Functionally, inhibitor of protein-phosphatase 1. This chain is Protein phosphatase inhibitor 2 (PPP1R2), found in Oryctolagus cuniculus (Rabbit).